A 60-amino-acid chain; its full sequence is Large ribosomal subunit protein bL32 (60 aa).

The tract at residues 1–43 (MAVQQNKKSPSKRGMHRSHDALTNPPLAIEPTTGEIHLRHHIS) is disordered.

This sequence belongs to the bacterial ribosomal protein bL32 family.

This chain is Large ribosomal subunit protein bL32, found in Nitrosomonas europaea (strain ATCC 19718 / CIP 103999 / KCTC 2705 / NBRC 14298).